We begin with the raw amino-acid sequence, 218 residues long: N-(5'-phosphoribosyl)anthranilate isomerase (218 aa).

Belongs to the TrpF family.

The catalysed reaction is N-(5-phospho-beta-D-ribosyl)anthranilate = 1-(2-carboxyphenylamino)-1-deoxy-D-ribulose 5-phosphate. It participates in amino-acid biosynthesis; L-tryptophan biosynthesis; L-tryptophan from chorismate: step 3/5. This chain is N-(5'-phosphoribosyl)anthranilate isomerase, found in Alcanivorax borkumensis (strain ATCC 700651 / DSM 11573 / NCIMB 13689 / SK2).